The chain runs to 388 residues: Na(+)/H(+) antiporter NhaA (388 aa).

The next 11 helical transmembrane spans lie at 14-34, 59-79, 95-115, 125-145, 154-174, 179-199, 219-239, 254-274, 292-312, 328-348, and 360-380; these read GGII…MGAT, MLLW…GLEV, AFPV…YLAF, GWAI…ALLG, IFLM…IALF, LSIV…LLNL, VLKS…FIPL, VLHP…NAGV, IIAG…WLAL, IMAV…IASL, and WAKL…YSWL.

The protein belongs to the NhaA Na(+)/H(+) (TC 2.A.33) antiporter family.

It is found in the cell inner membrane. The enzyme catalyses Na(+)(in) + 2 H(+)(out) = Na(+)(out) + 2 H(+)(in). In terms of biological role, na(+)/H(+) antiporter that extrudes sodium in exchange for external protons. The chain is Na(+)/H(+) antiporter NhaA from Salmonella choleraesuis (strain SC-B67).